We begin with the raw amino-acid sequence, 209 residues long: Large ribosomal subunit protein uL3 (209 aa).

Residues 128–156 form a disordered region; it reads FAGGSRTHGQSDRLRAPGSVGGSSDPSRT.

Belongs to the universal ribosomal protein uL3 family. As to quaternary structure, part of the 50S ribosomal subunit. Forms a cluster with proteins L14 and L19.

In terms of biological role, one of the primary rRNA binding proteins, it binds directly near the 3'-end of the 23S rRNA, where it nucleates assembly of the 50S subunit. The polypeptide is Large ribosomal subunit protein uL3 (Prosthecochloris aestuarii (strain DSM 271 / SK 413)).